Consider the following 1367-residue polypeptide: Probable serine/threonine-protein kinase pkgA (1367 aa).

4 disordered regions span residues 140–164 (IDEN…NKTI), 264–429 (KNGK…LLSR), 456–556 (PTPL…SRKP), and 771–792 (PREE…SDPV). A compositionally biased stretch (low complexity) spans 143–162 (NNNNNNNNNNNNNNNNNKNK). A compositionally biased stretch (pro residues) spans 271–282 (IKRPSPPLPPPQ). Residues 287 to 326 (EQQKEQKEQQKEQQKEQQKEQQKEQEQKQQEPQKYVKFEI) are compositionally biased toward basic and acidic residues. A compositionally biased stretch (low complexity) spans 340-381 (ISSSNISNEISKQQQQQQQQQQQQQQQQQQQQQQQQQQQQQQ). The span at 399–421 (ANNNILTTPLSSQPTQSLETPST) shows a compositional bias: polar residues. Over residues 506-517 (GEDEEEDEDDDN) the composition is skewed to acidic residues. A compositionally biased stretch (basic residues) spans 531-544 (LKNKRPFKKTHVHH). The Protein kinase domain maps to 810 to 1236 (FEFIKPITKG…AEEIKSHPFF (427 aa)). Residues 816-824 (ITKGGYGKV) and Lys839 each bind ATP. Asp933 serves as the catalytic Proton acceptor. Disordered regions lie at residues 971-1034 (FSPT…PSNT), 1084-1134 (FIPP…HNIH), and 1288-1312 (QNQN…TATA). Positions 979 to 1015 (NNQSSSSSSVSNIGGSNTIGSNISSTNNNNNNNNTTG) are enriched in low complexity. Polar residues predominate over residues 1025–1034 (NTETPIPSNT). 2 stretches are compositionally biased toward low complexity: residues 1092-1125 (QQPI…QQTT) and 1294-1312 (SSTI…TATA). One can recognise an AGC-kinase C-terminal domain in the interval 1237–1347 (KSINWKTILT…VNFQSLLELN (111 aa)).

It belongs to the protein kinase superfamily. AGC Ser/Thr protein kinase family.

It carries out the reaction L-seryl-[protein] + ATP = O-phospho-L-seryl-[protein] + ADP + H(+). The catalysed reaction is L-threonyl-[protein] + ATP = O-phospho-L-threonyl-[protein] + ADP + H(+). This chain is Probable serine/threonine-protein kinase pkgA (pkgA), found in Dictyostelium discoideum (Social amoeba).